A 150-amino-acid chain; its full sequence is 3-hydroxyacyl-[acyl-carrier-protein] dehydratase FabZ (150 aa).

Histidine 54 is an active-site residue.

This sequence belongs to the thioester dehydratase family. FabZ subfamily.

It localises to the cytoplasm. It carries out the reaction a (3R)-hydroxyacyl-[ACP] = a (2E)-enoyl-[ACP] + H2O. Involved in unsaturated fatty acids biosynthesis. Catalyzes the dehydration of short chain beta-hydroxyacyl-ACPs and long chain saturated and unsaturated beta-hydroxyacyl-ACPs. The polypeptide is 3-hydroxyacyl-[acyl-carrier-protein] dehydratase FabZ (Vibrio campbellii (strain ATCC BAA-1116)).